Here is a 259-residue protein sequence, read N- to C-terminus: Translation initiation factor IF-2, chloroplastic (259 aa).

One can recognise a tr-type G domain in the interval 171–259; that stretch reads LRAPIVAVLG…LLIIAADEGI (89 aa). Residue 180–187 coordinates GTP; sequence GHVNHGKT.

Belongs to the TRAFAC class translation factor GTPase superfamily. Classic translation factor GTPase family. IF-2 subfamily.

Its subcellular location is the plastid. It localises to the chloroplast. Its function is as follows. One of the essential components for the initiation of protein synthesis. Protects formylmethionyl-tRNA from spontaneous hydrolysis and promotes its binding to the 30S ribosomal subunits. Also involved in the hydrolysis of GTP during the formation of the 70S ribosomal complex. The chain is Translation initiation factor IF-2, chloroplastic (infB) from Galdieria sulphuraria (Red alga).